The sequence spans 357 residues: Holliday junction branch migration complex subunit RuvB (357 aa).

Residues 1 to 15 (MAIQSDSLSSLPDSP) show a composition bias toward low complexity. A disordered region spans residues 1–30 (MAIQSDSLSSLPDSPRIVAPQPVSPNEESI). Residues 13-195 (DSPRIVAPQP…FGIVSRLEFY (183 aa)) are large ATPase domain (RuvB-L). Residues leucine 34, arginine 35, glycine 76, lysine 79, threonine 80, threonine 81, 142-144 (EDF), arginine 185, tyrosine 195, and arginine 232 each bind ATP. Position 80 (threonine 80) interacts with Mg(2+). Positions 196–266 (NTDELARIVT…AAGRALAMLD (71 aa)) are small ATPAse domain (RuvB-S). The segment at 269–357 (PQGLDVMDRK…SGGTGELFSK (89 aa)) is head domain (RuvB-H). Residues arginine 305, arginine 324, and arginine 329 each coordinate DNA.

This sequence belongs to the RuvB family. As to quaternary structure, homohexamer. Forms an RuvA(8)-RuvB(12)-Holliday junction (HJ) complex. HJ DNA is sandwiched between 2 RuvA tetramers; dsDNA enters through RuvA and exits via RuvB. An RuvB hexamer assembles on each DNA strand where it exits the tetramer. Each RuvB hexamer is contacted by two RuvA subunits (via domain III) on 2 adjacent RuvB subunits; this complex drives branch migration. In the full resolvosome a probable DNA-RuvA(4)-RuvB(12)-RuvC(2) complex forms which resolves the HJ.

Its subcellular location is the cytoplasm. It carries out the reaction ATP + H2O = ADP + phosphate + H(+). Functionally, the RuvA-RuvB-RuvC complex processes Holliday junction (HJ) DNA during genetic recombination and DNA repair, while the RuvA-RuvB complex plays an important role in the rescue of blocked DNA replication forks via replication fork reversal (RFR). RuvA specifically binds to HJ cruciform DNA, conferring on it an open structure. The RuvB hexamer acts as an ATP-dependent pump, pulling dsDNA into and through the RuvAB complex. RuvB forms 2 homohexamers on either side of HJ DNA bound by 1 or 2 RuvA tetramers; 4 subunits per hexamer contact DNA at a time. Coordinated motions by a converter formed by DNA-disengaged RuvB subunits stimulates ATP hydrolysis and nucleotide exchange. Immobilization of the converter enables RuvB to convert the ATP-contained energy into a lever motion, pulling 2 nucleotides of DNA out of the RuvA tetramer per ATP hydrolyzed, thus driving DNA branch migration. The RuvB motors rotate together with the DNA substrate, which together with the progressing nucleotide cycle form the mechanistic basis for DNA recombination by continuous HJ branch migration. Branch migration allows RuvC to scan DNA until it finds its consensus sequence, where it cleaves and resolves cruciform DNA. The sequence is that of Holliday junction branch migration complex subunit RuvB from Bordetella bronchiseptica (strain ATCC BAA-588 / NCTC 13252 / RB50) (Alcaligenes bronchisepticus).